The chain runs to 202 residues: Sterile alpha motif domain-containing protein 10 (202 aa).

The tract at residues 1-22 is disordered; it reads MFTELRSKLSPPRARAGAVRPG. The region spanning 118–184 is the SAM domain; the sequence is WSQQDVCKWL…LQQVLHLQVR (67 aa).

The sequence is that of Sterile alpha motif domain-containing protein 10 from Mus musculus (Mouse).